A 355-amino-acid chain; its full sequence is Neutral protease 2 homolog MEP6 (355 aa).

The N-terminal stretch at 1 to 19 is a signal peptide; it reads MRLSSSLIALVALAGQALA. A propeptide spanning residues 20–179 is cleaved from the precursor; it reads LPFNELAERD…ASAIPELNKR (160 aa). 2 disulfide bridges follow: Cys-187-Cys-259 and Cys-266-Cys-283. His-307 serves as a coordination point for Zn(2+). The active site involves Glu-308. Zn(2+) is bound by residues His-311 and Asp-322.

It belongs to the peptidase M35 family. Requires Zn(2+) as cofactor.

The protein localises to the secreted. The enzyme catalyses Preferential cleavage of bonds with hydrophobic residues in P1'. Also 3-Asn-|-Gln-4 and 8-Gly-|-Ser-9 bonds in insulin B chain.. In terms of biological role, secreted metalloproteinase that allows assimilation of proteinaceous substrates. Shows high activities on basic nuclear substrates such as histone and protamine. May be involved in virulence. This chain is Neutral protease 2 homolog MEP6 (MEP6), found in Coccidioides posadasii (strain C735) (Valley fever fungus).